A 318-amino-acid polypeptide reads, in one-letter code: Pantothenate kinase (318 aa).

ATP is bound at residue 96-103 (GSVAVGKS).

It belongs to the prokaryotic pantothenate kinase family.

It is found in the cytoplasm. It catalyses the reaction (R)-pantothenate + ATP = (R)-4'-phosphopantothenate + ADP + H(+). The protein operates within cofactor biosynthesis; coenzyme A biosynthesis; CoA from (R)-pantothenate: step 1/5. The polypeptide is Pantothenate kinase (Coxiella burnetii (strain Dugway 5J108-111)).